The primary structure comprises 473 residues: Rifampicin monooxygenase (473 aa).

FAD-binding residues include threonine 12, glutamate 31, lysine 32, and arginine 41. Residue arginine 43 coordinates rifampicin. Glutamine 98, valine 122, and threonine 156 together coordinate FAD. Residue arginine 196 coordinates rifampicin. Aspartate 276 provides a ligand contact to FAD. Glycine 285 serves as a coordination point for rifampicin. Residues leucine 289 and asparagine 290 each coordinate FAD.

This sequence belongs to the rifampicin monooxygenase family. Homodimer. FAD is required as a cofactor.

The catalysed reaction is rifampicin + NADPH + O2 = rifampicin para-naphthoquinone carboxamide + NADP(+) + H2O + H(+). The enzyme catalyses rifampicin + NADH + O2 = rifampicin para-naphthoquinone carboxamide + NAD(+) + H2O + H(+). In terms of biological role, monooxygenase that can modify rifampicin, thereby inactivating its antibiotic activity. It constitutes a secondary rifampicin resistance factor. The sequence is that of Rifampicin monooxygenase from Nocardia farcinica (strain IFM 10152).